Reading from the N-terminus, the 269-residue chain is MTTLPRYAVFGNPVAHSKSPQIHRQFALQEGVDIEYERICADIGGFAQAVSTFFETGGCGANVTVPFKQEAFDLADEHSERALAAGAVNTLILLKNGKLRGDNTDGIGLANDITQVKNIAIEDKTILLLGAGGAVRGVIPVLKEHRPARIVITNRTHAKAEELARLFGIEAVPMADLNGGFDIIINGTSGGLSGQLPAVSPEIFRDCRLAYDMVYGEAALAFLNFAQSNGAAEVSDGLGMLVGQAAASYHIWRGFTPDIRPVIEYMKAL.

Residues 17–19 (SKS) and threonine 64 each bind shikimate. Lysine 68 acts as the Proton acceptor in catalysis. Glutamate 80 contacts NADP(+). Shikimate is bound by residues asparagine 89 and aspartate 105. Residues 130–134 (GAGGA), 154–159 (NRTHAK), and methionine 213 each bind NADP(+). Tyrosine 215 serves as a coordination point for shikimate. Glycine 237 serves as a coordination point for NADP(+).

This sequence belongs to the shikimate dehydrogenase family. In terms of assembly, homodimer.

The catalysed reaction is shikimate + NADP(+) = 3-dehydroshikimate + NADPH + H(+). Its pathway is metabolic intermediate biosynthesis; chorismate biosynthesis; chorismate from D-erythrose 4-phosphate and phosphoenolpyruvate: step 4/7. Its function is as follows. Involved in the biosynthesis of the chorismate, which leads to the biosynthesis of aromatic amino acids. Catalyzes the reversible NADPH linked reduction of 3-dehydroshikimate (DHSA) to yield shikimate (SA). The protein is Shikimate dehydrogenase (NADP(+)) of Neisseria flavescens.